Consider the following 775-residue polypeptide: Phosphoribosylformylglycinamidine synthase subunit PurL (775 aa).

The active site involves H81. Positions 84 and 123 each coordinate ATP. E125 is a Mg(2+) binding site. Substrate-binding positions include S126–H129 and R148. The Proton acceptor role is filled by H127. D149 lines the Mg(2+) pocket. Position 272 (Q272) interacts with substrate. Position 300 (D300) interacts with Mg(2+). Position 344 to 346 (E344 to Q346) interacts with substrate. ATP contacts are provided by D525 and G562. N563 contacts Mg(2+). Position 565 (S565) interacts with substrate.

The protein belongs to the FGAMS family. In terms of assembly, monomer. Part of the FGAM synthase complex composed of 1 PurL, 1 PurQ and 2 PurS subunits.

It localises to the cytoplasm. The catalysed reaction is N(2)-formyl-N(1)-(5-phospho-beta-D-ribosyl)glycinamide + L-glutamine + ATP + H2O = 2-formamido-N(1)-(5-O-phospho-beta-D-ribosyl)acetamidine + L-glutamate + ADP + phosphate + H(+). Its pathway is purine metabolism; IMP biosynthesis via de novo pathway; 5-amino-1-(5-phospho-D-ribosyl)imidazole from N(2)-formyl-N(1)-(5-phospho-D-ribosyl)glycinamide: step 1/2. Functionally, part of the phosphoribosylformylglycinamidine synthase complex involved in the purines biosynthetic pathway. Catalyzes the ATP-dependent conversion of formylglycinamide ribonucleotide (FGAR) and glutamine to yield formylglycinamidine ribonucleotide (FGAM) and glutamate. The FGAM synthase complex is composed of three subunits. PurQ produces an ammonia molecule by converting glutamine to glutamate. PurL transfers the ammonia molecule to FGAR to form FGAM in an ATP-dependent manner. PurS interacts with PurQ and PurL and is thought to assist in the transfer of the ammonia molecule from PurQ to PurL. This is Phosphoribosylformylglycinamidine synthase subunit PurL from Agrobacterium fabrum (strain C58 / ATCC 33970) (Agrobacterium tumefaciens (strain C58)).